The chain runs to 395 residues: ATP-dependent RNA helicase eIF4A (395 aa).

Positions 22–50 (TSFDDLGLKDELLRGIYGYGFENPSSIQQ) match the Q motif motif. The region spanning 53–223 (ILPVIKGNDV…GKFMRDPVRI (171 aa)) is the Helicase ATP-binding domain. ATP is bound at residue 66–73 (AQSGTGKT). Positions 171 to 174 (DEAD) match the DEAD box motif. One can recognise a Helicase C-terminal domain in the interval 234 to 395 (GIKQFYIDVE…EMPTNIADLI (162 aa)).

Belongs to the DEAD box helicase family. eIF4A subfamily. As to quaternary structure, component of the eIF4F complex, which composition varies with external and internal environmental conditions. It is composed of at least eIF4A, eIF4E and eIF4G.

Its subcellular location is the cytoplasm. The catalysed reaction is ATP + H2O = ADP + phosphate + H(+). Functionally, ATP-dependent RNA helicase which is a subunit of the eIF4F complex involved in cap recognition and is required for mRNA binding to ribosome. In the current model of translation initiation, eIF4A unwinds RNA secondary structures in the 5'-UTR of mRNAs which is necessary to allow efficient binding of the small ribosomal subunit, and subsequent scanning for the initiator codon. The chain is ATP-dependent RNA helicase eIF4A (TIF1) from Yarrowia lipolytica (strain CLIB 122 / E 150) (Yeast).